The primary structure comprises 508 residues: Photosystem II CP47 reaction center protein (508 aa).

6 helical membrane-spanning segments follow: residues 21–36 (SVHI…WAGS), 101–115 (IVFS…IWHW), 140–156 (GIHL…FGAF), 203–218 (IAAG…FHLS), 237–252 (VLSS…AFVV), and 457–472 (SFAL…HGAR).

It belongs to the PsbB/PsbC family. PsbB subfamily. In terms of assembly, PSII is composed of 1 copy each of membrane proteins PsbA, PsbB, PsbC, PsbD, PsbE, PsbF, PsbH, PsbI, PsbJ, PsbK, PsbL, PsbM, PsbT, PsbX, PsbY, PsbZ, Psb30/Ycf12, at least 3 peripheral proteins of the oxygen-evolving complex and a large number of cofactors. It forms dimeric complexes. The cofactor is Binds multiple chlorophylls. PSII binds additional chlorophylls, carotenoids and specific lipids..

The protein localises to the plastid. It localises to the chloroplast thylakoid membrane. In terms of biological role, one of the components of the core complex of photosystem II (PSII). It binds chlorophyll and helps catalyze the primary light-induced photochemical processes of PSII. PSII is a light-driven water:plastoquinone oxidoreductase, using light energy to abstract electrons from H(2)O, generating O(2) and a proton gradient subsequently used for ATP formation. The sequence is that of Photosystem II CP47 reaction center protein from Gossypium barbadense (Sea Island cotton).